The following is a 74-amino-acid chain: Arabinogalactan protein 20 (74 aa).

The N-terminal stretch at 1–26 (MASRNSVAVIALFAFVFAVISPFAGA) is a signal peptide. Gln-27 carries the post-translational modification Pyrrolidone carboxylic acid. 3 positions are modified to 4-hydroxyproline: Pro-31, Pro-33, and Pro-35. Pro-31, Pro-33, and Pro-35 each carry an O-linked (Ara...) hydroxyproline glycan. Residue Ser-37 is the site of GPI-anchor amidated serine attachment. A propeptide spans 38 to 74 (DGTSIDQGIAYLLMVVALVLTYLIHPLDASSSSYTFF) (removed in mature form).

It belongs to the AG-peptide AGP family. Post-translationally, contains 4-hydroxyproline; hydroxylated on Pro-31, Pro-33 and Pro-35. In terms of processing, O-glycosylated on hydroxyprolines; noncontiguous hydroxylproline residues are glycosylated with arabinogalactan.

The protein localises to the cell membrane. Its function is as follows. Proteoglycan that seems to be implicated in diverse developmental roles such as differentiation, cell-cell recognition, embryogenesis and programmed cell death. This Arabidopsis thaliana (Mouse-ear cress) protein is Arabinogalactan protein 20.